The sequence spans 84 residues: Hydramacin-1 (84 aa).

A signal peptide spans 1 to 24 (MRTVVFFILVSIFLVALKPTGTQA). At glutamine 25 the chain carries Pyrrolidone carboxylic acid. Disulfide bonds link cysteine 29–cysteine 72, cysteine 36–cysteine 65, cysteine 51–cysteine 81, and cysteine 55–cysteine 83.

In terms of tissue distribution, expressed in the endodermal epithelium.

The protein resides in the secreted. It is found in the target cell membrane. Functionally, cationic antimicrobial peptide potently active against Gram-positive and Gram-negative bacteria including multi-resistant human pathogenic strains. Is not active against the Gram-positive Coccus species, Gram-negative non-fermentation species and against the fungus C.albicans. It leads to aggregation of bacteria as an initial step of its bactericidal mechanism. Aggregated cells are connected via electron-dense contacts and adopt a thorn apple-like morphology. Hydramycin contains a belt of positively charged residues that separate two hydrophobic areas. This structure may explain the observed aggregation of bacteria, since each of these areas can immerse into the outer leaflets of the membranes of two individual bacteria. Is able to permeabilize membranes of viable bacteria at low and neutral pH values, but no pore-forming activity is not detected. The protein is Hydramacin-1 of Hydra vulgaris (Hydra).